Reading from the N-terminus, the 705-residue chain is Translation initiation factor IF-2 (705 aa).

Residues 40-124 (DDQIKALDKK…QPAAPKEIPS (85 aa)) form a disordered region. Basic and acidic residues predominate over residues 41 to 58 (DQIKALDKKFKKEQKNDN). The segment covering 59 to 77 (KQSTQNNHQKSNNQNQNKG) has biased composition (low complexity). Residues 94–108 (KGNKKNNRNNKKNNK) are compositionally biased toward basic residues. In terms of domain architecture, tr-type G spans 207 to 376 (ERPAVVTIMG…GLVAEVQELK (170 aa)). The tract at residues 216–223 (GHVDHGKT) is G1. A GTP-binding site is contributed by 216-223 (GHVDHGKT). The interval 241–245 (GITQH) is G2. The interval 262-265 (DTPG) is G3. GTP is bound by residues 262–266 (DTPGH) and 316–319 (NKID). The segment at 316–319 (NKID) is G4. A G5 region spans residues 352 to 354 (SAL).

The protein belongs to the TRAFAC class translation factor GTPase superfamily. Classic translation factor GTPase family. IF-2 subfamily.

The protein resides in the cytoplasm. One of the essential components for the initiation of protein synthesis. Protects formylmethionyl-tRNA from spontaneous hydrolysis and promotes its binding to the 30S ribosomal subunits. Also involved in the hydrolysis of GTP during the formation of the 70S ribosomal complex. This is Translation initiation factor IF-2 from Staphylococcus aureus (strain USA300).